We begin with the raw amino-acid sequence, 505 residues long: MSTMLWVVVAAVLLFVLPVVRVPMLDLTRRNIIRWQRGGIQKYTTRYYGFFHPYCNAGGGGEKVLWKAVQETLLYDPNCSIVIYTGDVDSSPKEIIANVIKRFDYEMDFNRVQFVFLKYRKWVDGSTWKHLTLVGQAMGSMLLTIEALLRFVPDIWLDTMGYPFGYPVVRWLAGLPVMTYTHYPVISSDMIHKIEIENQKQPSKKGTLKLIYWKLFMKWYQYVGKFVDVAITNSTWTGNHIRSIWKRVKIKVMYPPCSTEKLVKNSSPTAYETRQNQAVLIAQFRPEKRHKLVIQAYSDFISRTASKDHFKLVLIGSTRSEEDRAYVETLKSWAFDTLKIPKESLTFKTDCSYDDIKKFLAESTFGINAMWNEHFGIAVVEYAAAGLISLVHASAGPLLDIIVPWDSAKKQQLPYSDSTKDTRTGLFFKDKSDPDYKPTDAQFNNYGSLADIFEEANSLSIAERKQISERAKECASNKFSDNTFNHAWDHALDELEHKTSRLGSN.

At 1-4 the chain is on the lumenal side; that stretch reads MSTM. A helical membrane pass occupies residues 5–25; sequence LWVVVAAVLLFVLPVVRVPML. Over 26–130 the chain is Cytoplasmic; that stretch reads DLTRRNIIRW…KWVDGSTWKH (105 aa). An intramembrane region (helical) is located at residues 131-151; that stretch reads LTLVGQAMGSMLLTIEALLRF. Residues 152 to 374 lie on the Cytoplasmic side of the membrane; the sequence is VPDIWLDTMG…FGINAMWNEH (223 aa). The helical intramembrane region spans 375–395; the sequence is FGIAVVEYAAAGLISLVHASA. Residues 396-505 lie on the Cytoplasmic side of the membrane; the sequence is GPLLDIIVPW…EHKTSRLGSN (110 aa).

Belongs to the glycosyltransferase group 1 family.

The protein resides in the endoplasmic reticulum membrane. The enzyme catalyses an alpha-D-Man-(1-&gt;3)-[alpha-D-Man-(1-&gt;6)]-beta-D-Man-(1-&gt;4)-beta-D-GlcNAc-(1-&gt;4)-alpha-D-GlcNAc-diphospho-di-trans,poly-cis-dolichol + 2 GDP-alpha-D-mannose = an alpha-D-Man-(1-&gt;2)-alpha-D-Man-(1-&gt;2)-alpha-D-Man-(1-&gt;3)-[alpha-D-Man-(1-&gt;6)]-beta-D-Man-(1-&gt;4)-beta-D-GlcNAc-(1-&gt;4)-alpha-D-GlcNAc-diphospho-di-trans,poly-cis-dolichol + 2 GDP + 2 H(+). It participates in protein modification; protein glycosylation. In terms of biological role, GDP-Man:Man(3)GlcNAc(2)-PP-Dol alpha-1,2-mannosyltransferase that operates in the biosynthetic pathway of dolichol-linked oligosaccharides, the glycan precursors employed in protein asparagine (N)-glycosylation. The assembly of dolichol-linked oligosaccharides begins on the cytosolic side of the endoplasmic reticulum membrane and finishes in its lumen. The sequential addition of sugars to dolichol pyrophosphate produces dolichol-linked oligosaccharides containing fourteen sugars, including two GlcNAcs, nine mannoses and three glucoses. Once assembled, the oligosaccharide is transferred from the lipid to nascent proteins by oligosaccharyltransferases. Catalyzes, on the cytoplasmic face of the endoplasmic reticulum, the addition of the fourth and fifth mannose residues to the dolichol-linked oligosaccharide chain, to produce Man(5)GlcNAc(2)-PP-dolichol core oligosaccharide. The chain is GDP-Man:Man(3)GlcNAc(2)-PP-Dol alpha-1,2-mannosyltransferase (ALG11) from Candida glabrata (strain ATCC 2001 / BCRC 20586 / JCM 3761 / NBRC 0622 / NRRL Y-65 / CBS 138) (Yeast).